Consider the following 117-residue polypeptide: Small ribosomal subunit protein bS6 (117 aa).

The tract at residues 96-117 is disordered; it reads KEAAAPAPKAAPVESAPAVEAE. Positions 99 to 117 are enriched in low complexity; that stretch reads AAPAPKAAPVESAPAVEAE.

Belongs to the bacterial ribosomal protein bS6 family.

In terms of biological role, binds together with bS18 to 16S ribosomal RNA. This is Small ribosomal subunit protein bS6 from Geobacter sulfurreducens (strain ATCC 51573 / DSM 12127 / PCA).